A 287-amino-acid polypeptide reads, in one-letter code: Hydroxysteroid 11-beta-dehydrogenase 1-like protein (287 aa).

Residues 1 to 15 form the signal peptide; it reads MKVLLLTGLGALFFA. Residues 36–62, 87–88, and 114–116 contribute to the NADP(+) site; these read GASAGVGEELAYHYARLGSHLVLTAHT, DM, and NHI. Serine 165 contributes to the substrate binding site. The Proton acceptor role is filled by tyrosine 178. Residues 178–182 and 211–217 contribute to the NADP(+) site; these read YSAAK and GLRDRAS.

The protein belongs to the short-chain dehydrogenases/reductases (SDR) family.

It is found in the secreted. The enzyme catalyses cortisone + NADPH + H(+) = cortisol + NADP(+). Unidirectional NADP(+)-dependent cortisol dehydrogenase (in vitro). This Macaca fascicularis (Crab-eating macaque) protein is Hydroxysteroid 11-beta-dehydrogenase 1-like protein (HSD11B1L).